We begin with the raw amino-acid sequence, 67 residues long: Large ribosomal subunit protein uL29 (67 aa).

Belongs to the universal ribosomal protein uL29 family.

This Agathobacter rectalis (strain ATCC 33656 / DSM 3377 / JCM 17463 / KCTC 5835 / VPI 0990) (Eubacterium rectale) protein is Large ribosomal subunit protein uL29.